The following is a 243-amino-acid chain: PF03932 family protein CutC (243 aa).

It belongs to the CutC family.

The protein localises to the cytoplasm. The chain is PF03932 family protein CutC from Histophilus somni (strain 2336) (Haemophilus somnus).